We begin with the raw amino-acid sequence, 152 residues long: Glycine cleavage system H protein, mitochondrial (152 aa).

Residues 1–31 (MALRMWASSTANALRLSSATRPHYSPLSRCF) constitute a mitochondrion transit peptide. Residues 53-135 (VATVGITDHA…YEDGWMIKVK (83 aa)) form the Lipoyl-binding domain. Lysine 94 carries the N6-lipoyllysine modification.

This sequence belongs to the GcvH family. The glycine cleavage system is composed of four proteins: P, T, L and H. Requires (R)-lipoate as cofactor.

It localises to the mitochondrion. In terms of biological role, the glycine cleavage system catalyzes the degradation of glycine. The H protein shuttles the methylamine group of glycine from the P protein to the T protein. This is Glycine cleavage system H protein, mitochondrial (GDCSH) from Flaveria pubescens (Yellowtops).